Consider the following 154-residue polypeptide: AP-1 complex subunit sigma-3 (154 aa).

Belongs to the adaptor complexes small subunit family. In terms of assembly, adaptor protein complex 1 (AP-1) is a heterotetramer composed of two large adaptins (gamma-type subunit AP1G1 and beta-type subunit AP1B1), a medium adaptin (mu-type subunit AP1M1 or AP1M2) and a small adaptin (sigma-type subunit AP1S1 or AP1S2 or AP1S3).

It localises to the golgi apparatus. The protein resides in the cytoplasmic vesicle membrane. Its subcellular location is the membrane. It is found in the clathrin-coated pit. Subunit of clathrin-associated adaptor protein complex 1 that plays a role in protein sorting in the late-Golgi/trans-Golgi network (TGN) and/or endosomes. The AP complexes mediate both the recruitment of clathrin to membranes and the recognition of sorting signals within the cytosolic tails of transmembrane cargo molecules. Involved in TLR3 trafficking. The protein is AP-1 complex subunit sigma-3 (Ap1s3) of Mus musculus (Mouse).